The sequence spans 285 residues: Sulfotransferase 2A2 (285 aa).

3'-phosphoadenylyl sulfate contacts are provided by Lys-44, Ser-45, Gly-46, Thr-47, Asn-48, and Trp-49. His-99 functions as the Proton acceptor in the catalytic mechanism. 8 residues coordinate 3'-phosphoadenylyl sulfate: Arg-121, Ser-129, Tyr-184, Ser-218, Met-223, Arg-247, Lys-248, and Gly-249.

The protein belongs to the sulfotransferase 1 family.

The protein localises to the cytoplasm. It catalyses the reaction an alcohol + 3'-phosphoadenylyl sulfate = an alkyl sulfate + adenosine 3',5'-bisphosphate + H(+). Its function is as follows. Sulfotransferase that utilizes 3'-phospho-5'-adenylyl sulfate (PAPS) as sulfonate donor to catalyze the sulfate conjugation of a potential wide variety of acceptor molecules bearing a hydroxyl group. Sulfonation increases the water solubility of most compounds, and therefore their renal excretion, but it can also result in bioactivation to form active metabolites. The polypeptide is Sulfotransferase 2A2 (Mus musculus (Mouse)).